A 234-amino-acid chain; its full sequence is Glucosamine-6-phosphate deaminase (234 aa).

The active-site Proton acceptor; for enolization step is the Asp-63. Asn-129 (for ring-opening step) is an active-site residue. His-131 functions as the Proton acceptor; for ring-opening step in the catalytic mechanism. The active-site For ring-opening step is the Glu-136.

This sequence belongs to the glucosamine/galactosamine-6-phosphate isomerase family. NagB subfamily.

The enzyme catalyses alpha-D-glucosamine 6-phosphate + H2O = beta-D-fructose 6-phosphate + NH4(+). It participates in amino-sugar metabolism; N-acetylneuraminate degradation; D-fructose 6-phosphate from N-acetylneuraminate: step 5/5. In terms of biological role, catalyzes the reversible isomerization-deamination of glucosamine 6-phosphate (GlcN6P) to form fructose 6-phosphate (Fru6P) and ammonium ion. The polypeptide is Glucosamine-6-phosphate deaminase (Listeria monocytogenes serovar 1/2a (strain ATCC BAA-679 / EGD-e)).